An 887-amino-acid chain; its full sequence is MAQDSLLSKGYEFADVEEKWLSRWHKQNAFATKMEDGKDAFSIVIPPPNVTGVLHVGHALNNTLQDILVRYHRMCGDNTMWIPGTDHAGIATQNVVERQLATEGKGRHDLGREAFIERVWKWREDKGGTIVNQLKKIGSSCDWERERFTMDEGLSTSVREVFVRLYKEGLIYKGDYIVNWCPRCQTALADDEVEHEDSKGKLYHIRYPFADGSGSVVIATTRPETMPGDTAIAVHPDDERYAHLGEIGIKLPLTDRILPVVFDHHVEKDFGTGALKVTPSHDRNDYEIGIRHGLDLCKVIDEKGMMNDNAGKYAGLDRFECRKQIVEDLREQGYLVEIEDYDHAVGHCYRCKTVIEPTTSLQWFVSVKPLAAKAVDAVRDGQINIYPKTWYNTFYSWMDNIRDWCISRQIWWGHRIPAWSCADCGELIVETEDPTSCPKCGSSKLSQETDVLDTWFSSALWPFSTMGWPENTKELQTFYPTSVLITSFDILFFWVARMMMMGLHLMDEVPFKDVYLHALVRDKHGKKMSKSTGNVIDPLEIMAQYGTDSMRFTLTAFAAQGREIKLDEDRIEGYRHFINKIWNAARFAQMHIGDCDDSIRVAVETPKDLALGHRWILSRTAKLVEGIHRSLRGYLFNEVASLNYQFIWKEFCDWYLEWIKSDLFSDDLVARDQARGCLMVVLETILKTLHPITPFVTEEIWSVLPGERGFLATSAFPEVREEWKDEEAEAEMELLMGIITGIRNIRSEAEVHPSTKINATVICHDSKRADIIRSYTSGISDMTRLEGFTVVAEAEKPADAATYIYNDIEIFVPLAGLVDIEAELEKLSRERKKVEAKLKQINGKLGNAKFLAGAPEAVVAKVTGEKEELDAKLAKIDEASDRLKKLS.

Residues 48 to 58 carry the 'HIGH' region motif; sequence PNVTGVLHVGH. Positions 527 to 531 match the 'KMSKS' region motif; sequence KMSKS. Position 530 (Lys530) interacts with ATP. Residues 814-887 are a coiled coil; that stretch reads LAGLVDIEAE…EASDRLKKLS (74 aa).

Belongs to the class-I aminoacyl-tRNA synthetase family. ValS type 1 subfamily. As to quaternary structure, monomer.

The protein localises to the cytoplasm. The catalysed reaction is tRNA(Val) + L-valine + ATP = L-valyl-tRNA(Val) + AMP + diphosphate. Its function is as follows. Catalyzes the attachment of valine to tRNA(Val). As ValRS can inadvertently accommodate and process structurally similar amino acids such as threonine, to avoid such errors, it has a 'posttransfer' editing activity that hydrolyzes mischarged Thr-tRNA(Val) in a tRNA-dependent manner. The sequence is that of Valine--tRNA ligase from Desulfotalea psychrophila (strain LSv54 / DSM 12343).